The following is a 218-amino-acid chain: Runt-related transcription factor 2 (218 aa).

The 129-residue stretch at 67 to 195 (RGHKFYLEKK…TVDGPREPRR (129 aa)) folds into the Runt domain. A required for interaction with FOXO1 region spans residues 122 to 138 (VMAGNDENYSAELRNAS). A disordered region spans residues 189–218 (GPREPRRHRQKLDDSKPSLFSDRLSDLGRI). Lys204 participates in a covalent cross-link: Glycyl lysine isopeptide (Lys-Gly) (interchain with G-Cter in SUMO2).

Heterodimer of an alpha and a beta subunit. The alpha subunit binds DNA as a monomer and through the Runt domain. DNA-binding is increased by heterodimerization. Interacts with XRCC6 (Ku70) and XRCC5 (Ku80). Interacts with CCNB1, KAT6A and KAT6B. Interacts with HIVEP3. Interacts with IFI204. Interaction with SATB2; the interaction results in enhanced DNA binding and transactivation by these transcription factors. Binds to HIPK3. Interacts with FOXO1 (via a C-terminal region); the interaction inhibits RUNX2 transcriptional activity towards BGLAP. Interacts with FOXP3. Interacts with TMEM119. Interacts with OLFM2. Interacts with IPO7; the interaction inhibits RUNX2 nuclear translocation in osteoblasts. Phosphorylated; probably by MAP kinases (MAPK). Phosphorylation by HIPK3 is required for the SPEN/MINT and FGF2 transactivation during osteoblastic differentiation.

The protein resides in the nucleus. It is found in the cytoplasm. In terms of biological role, transcription factor involved in osteoblastic differentiation and skeletal morphogenesis. Essential for the maturation of osteoblasts and both intramembranous and endochondral ossification. CBF binds to the core site, 5'-PYGPYGGT-3', of a number of enhancers and promoters, including murine leukemia virus, polyomavirus enhancer, T-cell receptor enhancers, osteocalcin, osteopontin, bone sialoprotein, alpha 1(I) collagen, LCK, IL-3 and GM-CSF promoters. Inhibits KAT6B-dependent transcriptional activation. In osteoblasts, supports transcription activation: synergizes with SPEN/MINT to enhance FGFR2-mediated activation of the osteocalcin FGF-responsive element (OCFRE). This chain is Runt-related transcription factor 2 (Runx2), found in Rattus norvegicus (Rat).